Here is a 248-residue protein sequence, read N- to C-terminus: Thioesterase FSL2 (248 aa).

Active-site charge relay system residues include Ser-125, Asp-195, and His-223.

It belongs to the LovG family.

The protein operates within secondary metabolite biosynthesis. Thioesterase; part of the gene cluster that mediates the biosynthesis of fusarielins F, G and H, decaketide compounds with 5 methylations and a decaline core that act as mycoestrogens as they stimulate growth of MCF-7 breast cancer cells. The initial compound in the pathway is produced by the reducing polyketide synthase FSL1. FSL1 lacks an active enoyl reductase (ER) domain and biosynthesis of fusarielins relies on the trans-acting enoyl reductase FSL5, before it is released through hydrolysis catalyzed by the thioesterase FSL2. Fusarielins F, G, and H have a C11=C12 cis double bond and is fully reduced between C10 and C11 and between C12 and C13. FSL3 can be involved in the formation of the C11=C12 cis double bond by moving a hypothetical C10=C11 or C12=C13 trans double bond to form prefusarielin. Prefusarielin is oxygenated at C15 and C16 by the cytochrome P450 monooxygenase FSL4, resulting in fusarielin F, which subsequently is epoxidized into fusarielin G by the same enzyme. The final step in the pathway is a reduction of the carboxylic acid moiety to yield fusarielin H via a still undetermined mechanism. In Gibberella zeae (strain ATCC MYA-4620 / CBS 123657 / FGSC 9075 / NRRL 31084 / PH-1) (Wheat head blight fungus), this protein is Thioesterase FSL2.